The chain runs to 183 residues: uncharacterized protein (183 aa).

The segment at 1–23 is disordered; the sequence is MGSSFVIDRSSSSPAPPRGPAPK.

This is an uncharacterized protein from Saccharomyces cerevisiae (strain ATCC 204508 / S288c) (Baker's yeast).